A 329-amino-acid polypeptide reads, in one-letter code: Secretory carrier-associated membrane protein 2 (329 aa).

Disordered stretches follow at residues 1–21 (MSAF…FQDP) and 51–72 (VTQL…PTQP). Over 1-153 (MSAFDTNPFA…DYQRICKMLY (153 aa)) the chain is Cytoplasmic. The helical transmembrane segment at 154-174 (YLWMLHSVTLFLNLLACLAWF) threads the bilayer. Residues 175-181 (SGNSSKG) are Lumenal-facing. Residues 182–202 (VDFGLSILWFLIFTPCAFLCW) form a helical membrane-spanning segment. Residues 203–218 (YRPIYKAFRSDNSFSF) lie on the Cytoplasmic side of the membrane. The segment at 203-218 (YRPIYKAFRSDNSFSF) is interaction with SLC9A7. The chain crosses the membrane as a helical span at residues 219–239 (FVFFFVFFCQIGIYIIQLVGI). Residues 240-262 (PGLGDSGWIAALSTLDNHSLAIS) are Lumenal-facing. A helical transmembrane segment spans residues 263–283 (VIMMVVAGFFTLCAVLSVFLL). The Cytoplasmic portion of the chain corresponds to 284 to 329 (QRVHSLYRRTGASFQQAQEEFSQGIFSSRTFHRAASSAAQGAFQGN). 2 positions are modified to phosphoserine: Ser-319 and Ser-320.

This sequence belongs to the SCAMP family. As to quaternary structure, interacts with SLC6A4 and SLC9A7. Interacts with SLC9A5; this interaction regulates SLC9A5 cell-surface targeting and SLC9A5 activity. In terms of tissue distribution, widely expressed.

The protein localises to the golgi apparatus. The protein resides in the trans-Golgi network membrane. It localises to the recycling endosome membrane. Functionally, functions in post-Golgi recycling pathways. Acts as a recycling carrier to the cell surface. This Homo sapiens (Human) protein is Secretory carrier-associated membrane protein 2 (SCAMP2).